Reading from the N-terminus, the 453-residue chain is Bis(5'-adenosyl)-triphosphatase ENPP4 (453 aa).

An N-terminal signal peptide occupies residues Met1–Gly15. The Extracellular portion of the chain corresponds to Phe16–Ala407. Zn(2+)-binding residues include Asp34 and Thr70. Thr70 (AMP-threonine intermediate) is an active-site residue. 2 residues coordinate substrate: Asn91 and Tyr154. Residues Asn155 and Asn166 are each glycosylated (N-linked (GlcNAc...) asparagine). Residues Asp189, His193, Asp237, and His238 each coordinate Zn(2+). Asp189 lines the substrate pocket. Residues Cys254 and Cys287 are joined by a disulfide bond. A glycan (N-linked (GlcNAc...) asparagine) is linked at Asn276. His336 contacts Zn(2+). Residue Asn386 is glycosylated (N-linked (GlcNAc...) asparagine). Cys394 and Cys401 are oxidised to a cystine. The helical transmembrane segment at Ile408–Met428 threads the bilayer. Topologically, residues Gln429–Gly453 are cytoplasmic.

It belongs to the nucleotide pyrophosphatase/phosphodiesterase family. Zn(2+) is required as a cofactor. In terms of tissue distribution, expressed on the surface of vascular endothelia.

Its subcellular location is the cell membrane. The enzyme catalyses P(1),P(3)-bis(5'-adenosyl) triphosphate + H2O = AMP + ADP + 2 H(+). Hydrolyzes extracellular Ap3A into AMP and ADP, and Ap4A into AMP and ATP. Ap3A and Ap4A are diadenosine polyphosphates thought to induce proliferation of vascular smooth muscle cells. Acts as a procoagulant, mediating platelet aggregation at the site of nascent thrombus via release of ADP from Ap3A and activation of ADP receptors. The sequence is that of Bis(5'-adenosyl)-triphosphatase ENPP4 (ENPP4) from Homo sapiens (Human).